The sequence spans 168 residues: INO80 complex subunit 3 (168 aa).

The span at 115 to 129 (TNSTLSTPKSFHSPL) shows a compositional bias: polar residues. Residues 115–168 (TNSTLSTPKSFHSPLQSRGISPSSAQSSAAVSSSRKQKRKRTSEGPSERRARKK) form a disordered region. Low complexity predominate over residues 130–148 (QSRGISPSSAQSSAAVSSS). Residues 156 to 168 (TSEGPSERRARKK) are compositionally biased toward basic and acidic residues.

Component of the INO80 chromatin remodeling complex.

It is found in the nucleus. Functionally, component of the INO80 complex which remodels chromatin by shifting nucleosomes and is involved in DNA repair. The protein is INO80 complex subunit 3 (iec3) of Schizosaccharomyces pombe (strain 972 / ATCC 24843) (Fission yeast).